Here is a 372-residue protein sequence, read N- to C-terminus: Chaperone protein DnaJ (372 aa).

Positions 5–70 (DYYDLLEVGR…EKRAGYDRYG (66 aa)) constitute a J domain. Residues 134-212 (GIQAPIHYVT…CGGSGRRRDE (79 aa)) form a CR-type zinc finger. 8 residues coordinate Zn(2+): Cys147, Cys150, Cys164, Cys167, Cys186, Cys189, Cys200, and Cys203. 4 CXXCXGXG motif repeats span residues 147-154 (CDTCQGTG), 164-171 (CHTCQGSG), 186-193 (CTTCYGEG), and 200-207 (CKKCGGSG).

Belongs to the DnaJ family. As to quaternary structure, homodimer. It depends on Zn(2+) as a cofactor.

Its subcellular location is the cytoplasm. Functionally, participates actively in the response to hyperosmotic and heat shock by preventing the aggregation of stress-denatured proteins and by disaggregating proteins, also in an autonomous, DnaK-independent fashion. Unfolded proteins bind initially to DnaJ; upon interaction with the DnaJ-bound protein, DnaK hydrolyzes its bound ATP, resulting in the formation of a stable complex. GrpE releases ADP from DnaK; ATP binding to DnaK triggers the release of the substrate protein, thus completing the reaction cycle. Several rounds of ATP-dependent interactions between DnaJ, DnaK and GrpE are required for fully efficient folding. Also involved, together with DnaK and GrpE, in the DNA replication of plasmids through activation of initiation proteins. The chain is Chaperone protein DnaJ from Wolbachia pipientis wMel.